The sequence spans 246 residues: Ribonuclease 3 (246 aa).

The region spanning 10–135 is the RNase III domain; sequence LENFLTLNNI…FVAAIYLDLG (126 aa). A Mg(2+)-binding site is contributed by Glu50. Residue Asp54 is part of the active site. Mg(2+) contacts are provided by Asp121 and Glu124. Glu124 is an active-site residue. The region spanning 161–230 is the DRBM domain; the sequence is DPKSSFQEYI…ATRALETLKA (70 aa).

The protein belongs to the ribonuclease III family. Homodimer. Mg(2+) serves as cofactor.

The protein localises to the cytoplasm. The catalysed reaction is Endonucleolytic cleavage to 5'-phosphomonoester.. Functionally, digests double-stranded RNA. Involved in the processing of primary rRNA transcript to yield the immediate precursors to the large and small rRNAs (23S and 16S). Processes some mRNAs, and tRNAs when they are encoded in the rRNA operon. Processes pre-crRNA and tracrRNA of type II CRISPR loci if present in the organism. The sequence is that of Ribonuclease 3 from Mycoplasma mobile (strain ATCC 43663 / 163K / NCTC 11711) (Mesomycoplasma mobile).